A 157-amino-acid chain; its full sequence is MEFLMSKHEADAPHLLIVEARFYDDLADALLDGAKAALDEAGATYDVVTVPGALEIPATISFALDGADNGGTEYDGFVALGTVIRGETYHFDIVSNESCRALTDLSVEESIAIGNGILTVENEEQAWVRARREDKDKGGFAARAALTMIGLRKKFGA.

Residues Phe-22, 53–55 (ALE), and 82–84 (TVI) each bind 5-amino-6-(D-ribitylamino)uracil. (2S)-2-hydroxy-3-oxobutyl phosphate is bound at residue 87-88 (ET). His-90 acts as the Proton donor in catalysis. Asn-115 is a binding site for 5-amino-6-(D-ribitylamino)uracil. A (2S)-2-hydroxy-3-oxobutyl phosphate-binding site is contributed by Arg-129.

This sequence belongs to the DMRL synthase family. As to quaternary structure, homopentamer.

The enzyme catalyses (2S)-2-hydroxy-3-oxobutyl phosphate + 5-amino-6-(D-ribitylamino)uracil = 6,7-dimethyl-8-(1-D-ribityl)lumazine + phosphate + 2 H2O + H(+). Its pathway is cofactor biosynthesis; riboflavin biosynthesis; riboflavin from 2-hydroxy-3-oxobutyl phosphate and 5-amino-6-(D-ribitylamino)uracil: step 1/2. Catalyzes the formation of 6,7-dimethyl-8-ribityllumazine by condensation of 5-amino-6-(D-ribitylamino)uracil with 3,4-dihydroxy-2-butanone 4-phosphate. This is the penultimate step in the biosynthesis of riboflavin. The chain is 6,7-dimethyl-8-ribityllumazine synthase 1 (ribH1) from Brucella melitensis biotype 1 (strain ATCC 23456 / CCUG 17765 / NCTC 10094 / 16M).